Here is a 402-residue protein sequence, read N- to C-terminus: 26S proteasome regulatory subunit 8 (402 aa).

186–193 (GPPGTGKT) provides a ligand contact to ATP.

This sequence belongs to the AAA ATPase family.

It is found in the cytoplasm. It localises to the nucleus. In terms of biological role, the 26S proteasome is involved in the ATP-dependent degradation of ubiquitinated proteins. The regulatory (or ATPase) complex confers ATP dependency and substrate specificity to the 26S complex. The polypeptide is 26S proteasome regulatory subunit 8 (Manduca sexta (Tobacco hawkmoth)).